The following is a 141-amino-acid chain: Large ribosomal subunit protein uL11 (141 aa).

The protein belongs to the universal ribosomal protein uL11 family. In terms of assembly, part of the ribosomal stalk of the 50S ribosomal subunit. Interacts with L10 and the large rRNA to form the base of the stalk. L10 forms an elongated spine to which L12 dimers bind in a sequential fashion forming a multimeric L10(L12)X complex. In terms of processing, one or more lysine residues are methylated.

Its function is as follows. Forms part of the ribosomal stalk which helps the ribosome interact with GTP-bound translation factors. The sequence is that of Large ribosomal subunit protein uL11 from Streptococcus thermophilus (strain CNRZ 1066).